Here is a 465-residue protein sequence, read N- to C-terminus: Cysteine--tRNA ligase (465 aa).

Cys-28 contacts Zn(2+). The 'HIGH' region motif lies at 30 to 40 (PTVYNYIHIGN). Zn(2+) contacts are provided by Cys-208, His-233, and Glu-237. The 'KMSKS' region motif lies at 265 to 269 (KMSKS). Lys-268 provides a ligand contact to ATP.

This sequence belongs to the class-I aminoacyl-tRNA synthetase family. In terms of assembly, monomer. Requires Zn(2+) as cofactor.

Its subcellular location is the cytoplasm. The enzyme catalyses tRNA(Cys) + L-cysteine + ATP = L-cysteinyl-tRNA(Cys) + AMP + diphosphate. The sequence is that of Cysteine--tRNA ligase from Exiguobacterium sibiricum (strain DSM 17290 / CCUG 55495 / CIP 109462 / JCM 13490 / 255-15).